Consider the following 316-residue polypeptide: Protein lifeguard 2 (316 aa).

Residues 1-49 (MTQGKLSVANKAPGTEGQQQANGEKKDAPAVPSAPPSYEEATSGEGLKA) are disordered. A run of 3 helical transmembrane segments spans residues 106 to 126 (VYTILLVQLLVTLAVVALFTF), 138 to 158 (PGWYWASYAVFFATYLTLACC), and 165 to 185 (FPWNLILLTIFTLSMAYLTGM). N-linked (GlcNAc...) asparagine glycosylation is present at N191. Helical transmembrane passes span 194 to 214 (SVLLCLGITALVCLSVTIFSF), 225 to 245 (GVLFVLLMTLFFSGLLLAILL), 251 to 271 (PWLHAVYAVLGAGVFTLFLAF), and 290 to 310 (IFGALNIYLDIIYIFTFFLQL).

The protein belongs to the BI1 family. LFG subfamily. In terms of assembly, interacts with FAS/TNFRSF6 and BAX. Expressed at high levels on dendrites and to a lesser extent on the soma and axons of neurons in various regions of brain.

The protein localises to the cell membrane. Its subcellular location is the membrane raft. The protein resides in the postsynaptic cell membrane. Functionally, antiapoptotic protein which protects cells uniquely from Fas-induced apoptosis. Regulates Fas-mediated apoptosis in neurons by interfering with caspase-8 activation. Plays a role in cerebellar development by affecting cerebellar size, internal granular layer (IGL) thickness, and Purkinje cell (PC) development. The chain is Protein lifeguard 2 (Faim2) from Rattus norvegicus (Rat).